We begin with the raw amino-acid sequence, 456 residues long: tRNA-2-methylthio-N(6)-dimethylallyladenosine synthase (456 aa).

Positions 6 to 123 (KHVYIETYGC…LPNLIEEAQR (118 aa)) constitute an MTTase N-terminal domain. Residues cysteine 15, cysteine 52, cysteine 86, cysteine 160, cysteine 164, and cysteine 167 each coordinate [4Fe-4S] cluster. The Radical SAM core domain occupies 146–380 (RAEGPTAYVS…RILEMAASIS (235 aa)). One can recognise a TRAM domain in the interval 381–444 (EAMVGTEQWV…KNSLRGRLIE (64 aa)).

Belongs to the methylthiotransferase family. MiaB subfamily. Monomer. [4Fe-4S] cluster is required as a cofactor.

The protein localises to the cytoplasm. The catalysed reaction is N(6)-dimethylallyladenosine(37) in tRNA + (sulfur carrier)-SH + AH2 + 2 S-adenosyl-L-methionine = 2-methylsulfanyl-N(6)-dimethylallyladenosine(37) in tRNA + (sulfur carrier)-H + 5'-deoxyadenosine + L-methionine + A + S-adenosyl-L-homocysteine + 2 H(+). Catalyzes the methylthiolation of N6-(dimethylallyl)adenosine (i(6)A), leading to the formation of 2-methylthio-N6-(dimethylallyl)adenosine (ms(2)i(6)A) at position 37 in tRNAs that read codons beginning with uridine. The sequence is that of tRNA-2-methylthio-N(6)-dimethylallyladenosine synthase from Dichelobacter nodosus (strain VCS1703A).